We begin with the raw amino-acid sequence, 327 residues long: Vacuolar protein sorting-associated protein 26A (327 aa).

Residues 306-327 (RTNFHQRFESPDSQASAEQPEM) form a disordered region. S315 is subject to Phosphoserine. A compositionally biased stretch (polar residues) spans 316-327 (PDSQASAEQPEM).

This sequence belongs to the VPS26 family. As to quaternary structure, component of the heterotrimeric retromer cargo-selective complex (CSC), also described as vacuolar protein sorting subcomplex (VPS), formed by VPS26 (VPS26A or VPS26B), VPS29 and VPS35. The CSC has a highly elongated structure with VPS26 and VPS29 binding independently at opposite distal ends of VPS35 as central platform. The CSC is believed to associate with variable sorting nexins to form functionally distinct retromer complex variants. The originally described retromer complex (also called SNX-BAR retromer) is a pentamer containing the CSC and a heterodimeric membrane-deforming subcomplex formed between SNX1 or SNX2 and SNX5 or SNX6 (also called SNX-BAR subcomplex); the respective CSC and SNX-BAR subcomplexes associate with low affinity. The CSC associates with SNX3 to form a SNX3-retromer complex. The CSC associates with SNX27, the WASH complex and the SNX-BAR subcomplex to form the SNX27-retromer complex. Interacts with VPS29, VPS35, SNX27. Interacts with SNX1, SNX2, SNX5, SNX6, SNX3, RAB7A, ECPAS, EHD1, WASHC5, SORL1.

It localises to the cytoplasm. The protein localises to the endosome membrane. Its subcellular location is the early endosome. Functionally, acts as a component of the retromer cargo-selective complex (CSC). The CSC is believed to be the core functional component of retromer or respective retromer complex variants acting to prevent missorting of selected transmembrane cargo proteins into the lysosomal degradation pathway. The recruitment of the CSC to the endosomal membrane involves RAB7A and SNX3. The SNX-BAR retromer mediates retrograde transport of cargo proteins from endosomes to the trans-Golgi network (TGN) and is involved in endosome-to-plasma membrane transport for cargo protein recycling. The SNX3-retromer mediates the retrograde endosome-to-TGN transport of WLS distinct from the SNX-BAR retromer pathway. The SNX27-retromer is believed to be involved in endosome-to-plasma membrane trafficking and recycling of a broad spectrum of cargo proteins. The CSC complex seems to act as recruitment hub for other proteins, such as the WASH complex and TBC1D5. Required for retrograde transport of lysosomal enzyme receptor IGF2R. Required to regulate transcytosis of the polymeric immunoglobulin receptor (pIgR-pIgA). Required for the endosomal localization of WASHC2 (indicative for the WASH complex). Required for the endosomal localization of TBC1D5. Mediates retromer cargo recognition of SORL1 and is involved in trafficking of SORL1 implicated in sorting and processing of APP. Involved in retromer-independent lysosomal sorting of F2R. Involved in recycling of ADRB2. Acts redundantly with VSP26B in SNX-27 mediated endocytic recycling of SLC2A1/GLUT1. Enhances the affinity of SNX27 for PDZ-binding motifs in cargo proteins. This chain is Vacuolar protein sorting-associated protein 26A (Vps26a), found in Mus musculus (Mouse).